A 485-amino-acid polypeptide reads, in one-letter code: Adenosylhomocysteinase (485 aa).

Substrate is bound by residues threonine 64, aspartate 139, and glutamate 205. 206-208 contacts NAD(+); the sequence is TTT. 2 residues coordinate substrate: lysine 235 and aspartate 239. NAD(+) contacts are provided by residues asparagine 240, 269 to 274, glutamate 292, asparagine 327, 348 to 350, and asparagine 397; these read GYGDVG and IGH.

Belongs to the adenosylhomocysteinase family. Homotetramer. Requires NAD(+) as cofactor. As to expression, mainly in floral buds and stems.

It carries out the reaction S-adenosyl-L-homocysteine + H2O = L-homocysteine + adenosine. The protein operates within amino-acid biosynthesis; L-homocysteine biosynthesis; L-homocysteine from S-adenosyl-L-homocysteine: step 1/1. In terms of biological role, adenosylhomocysteine is a competitive inhibitor of S-adenosyl-L-methionine-dependent methyl transferase reactions; therefore adenosylhomocysteinase may play a key role in the control of methylations via regulation of the intracellular concentration of adenosylhomocysteine. The polypeptide is Adenosylhomocysteinase (SAHH) (Petroselinum crispum (Parsley)).